Here is a 266-residue protein sequence, read N- to C-terminus: MGTLTASLVAPSKLNPEKHSSLFVYKTRRKSHKNQSIVPVARLFGPAIFEASKLKVLFLGVDEKKHPGKLPRTYTLTHSDITSKLTLAISQTINNSQLQGWYNRLQRDEVVAEWKKVKGKMSLHVHCHISGGHFMLDLFARLRYYIFCKELPVVLKAFVHGDENLLKNYPELQQALVWVYFHSNIQEFNKVECWGPLKDAASPSSSGVGGGMNTSFTSNSNIKWILPKPCEETCTCCFPPMSVIPWPSTTNVENGTIQQGLQEQQS.

A chloroplast-targeting transit peptide spans 1-50 (MGTLTASLVAPSKLNPEKHSSLFVYKTRRKSHKNQSIVPVARLFGPAIFE).

Belongs to the staygreen family.

It localises to the plastid. The protein localises to the chloroplast. In terms of biological role, required to trigger chlorophyll degradation during leaf senescence and fruit ripening. This Capsicum annuum (Capsicum pepper) protein is Protein STAY-GREEN homolog, chloroplastic.